Here is a 341-residue protein sequence, read N- to C-terminus: Methionine import ATP-binding protein MetN 2 (341 aa).

The 240-residue stretch at 2-241 (IQFKNISKHY…PQHPTTKTFI (240 aa)) folds into the ABC transporter domain. Position 38 to 45 (38 to 45 (GYSGAGKS)) interacts with ATP.

The protein belongs to the ABC transporter superfamily. Methionine importer (TC 3.A.1.24) family. In terms of assembly, the complex is composed of two ATP-binding proteins (MetN), two transmembrane proteins (MetI) and a solute-binding protein (MetQ).

It localises to the cell inner membrane. It carries out the reaction L-methionine(out) + ATP + H2O = L-methionine(in) + ADP + phosphate + H(+). The catalysed reaction is D-methionine(out) + ATP + H2O = D-methionine(in) + ADP + phosphate + H(+). In terms of biological role, part of the ABC transporter complex MetNIQ involved in methionine import. Responsible for energy coupling to the transport system. The sequence is that of Methionine import ATP-binding protein MetN 2 from Acinetobacter baylyi (strain ATCC 33305 / BD413 / ADP1).